The chain runs to 535 residues: Putative cysteine ligase BshC (535 aa).

A coiled-coil region spans residues 420-477 (DTFKALKESINSAYKNLQEKLAPLGADFQKLTGENLGRVMAQVKYLEERAQKYHREKN).

This sequence belongs to the BshC family.

Its function is as follows. Involved in bacillithiol (BSH) biosynthesis. May catalyze the last step of the pathway, the addition of cysteine to glucosamine malate (GlcN-Mal) to generate BSH. This Carboxydothermus hydrogenoformans (strain ATCC BAA-161 / DSM 6008 / Z-2901) protein is Putative cysteine ligase BshC.